We begin with the raw amino-acid sequence, 3961 residues long: Replicase polyprotein 1ab (3961 aa).

The segment at 8 to 28 (CTCTPNARVFVAEGQVYCTRC) adopts a C4-type; atypical zinc-finger fold. The 112-residue stretch at 69-180 (ECSPAGACWL…EDFCPFECAM (112 aa)) folds into the Peptidase C31 domain. The segment at 69–182 (ECSPAGACWL…FCPFECAMAT (114 aa)) is PCP1-alpha. Active-site for Nsp1-alpha papain-like cysteine proteinase activity residues include Cys-76 and His-146. Residues 199 to 200 (IS) are important for host EIF2AK2 inhibition. Residues 263–382 (DTVPEGNCWW…IFRFGSHKWY (120 aa)) are PCP1-beta. The 121-residue stretch at 263–383 (DTVPEGNCWW…FRFGSHKWYG (121 aa)) folds into the Peptidase C32 domain. Catalysis depends on for Nsp1-beta papain-like cysteine proteinase activity residues Cys-270 and His-339. The interval 426–513 (LKHYSPPAEG…GEHWTVTVTP (88 aa)) is OTU-like. One can recognise a Peptidase C33 domain in the interval 428 to 535 (HYSPPAEGNC…QGCCEHKGGL (108 aa)). Residues Cys-437 and His-506 each act as for Nsp2 cysteine proteinase activity in the active site. Disordered stretches follow at residues 809–862 (RWTP…NSWE), 898–979 (ATPL…GVLG), and 1153–1213 (NQEP…GGGP). Pro residues predominate over residues 810 to 819 (WTPPPPPPKV). 8 helical membrane passes run 1266 to 1286 (LCLF…LGVF), 1296 to 1316 (GVFG…SDPV), 1345 to 1365 (SLVV…LGGA), 1368 to 1388 (IWHF…GAYV), 1583 to 1603 (LMAA…GIYV), 1650 to 1670 (ALVA…FVSI), 1685 to 1705 (CILL…LCVF), and 1719 to 1739 (ILWL…LAMV). Residues 1266–1388 (LCLFLCYSYP…ADCILAGAYV (123 aa)) form an HD1 region. The interval 1583–1745 (LMAALHVACS…LAMVLLVSLW (163 aa)) is HD2. The region spanning 1810–2013 (GAFRTRKPSL…ALLAAKPELE (204 aa)) is the Peptidase S32 domain. Residues His-1848, Asp-1873, and Ser-1927 each act as charge relay system; for 3C-like serine proteinase activity in the active site. 5 consecutive transmembrane segments (helical) span residues 2012 to 2032 (LEGG…WRMM), 2060 to 2080 (FSFG…ILMI), 2092 to 2112 (WSLA…LAAT), 2137 to 2157 (SPVP…LYLF), and 2164 to 2184 (QILV…FAEG). Positions 2036 to 2157 (WTPLVAVSFF…HLLAIILYLF (122 aa)) are HD3. Residues 2329–2358 (PTPTPPPAPVPIPLPPKVLENGPNAWGDED) are disordered. The span at 2330 to 2344 (TPTPPPAPVPIPLPP) shows a compositional bias: pro residues. The 164-residue stretch at 2488–2651 (IIDKLQGLTK…LPYKLYPVRG (164 aa)) folds into the NiRAN domain. A RdRp catalytic domain is found at 2890-3024 (GRCLEADLAS…YAESPTMPNY (135 aa)). The AV ZBD domain occupies 3145–3208 (GKKSRVCGYC…SPVGKGTSPL (64 aa)). Positions 3151, 3154, 3164, 3169, 3172, 3174, 3176, 3178, 3185, 3187, 3194, and 3197 each coordinate Zn(2+). The (+)RNA virus helicase ATP-binding domain occupies 3265 to 3417 (ASTALLPTCK…VFDIMPQTQL (153 aa)). 3298-3305 (GKTYWLLQ) contacts ATP. A (+)RNA virus helicase C-terminal domain is found at 3418–3546 (KTIWRFGQNI…AVHRDGQLIV (129 aa)). An AV-Nsp11N/CoV-Nsp15M domain is found at 3585-3681 (EGSSSPLPKV…LTKFVKGEAQ (97 aa)). One can recognise a NendoU domain in the interval 3683-3805 (LPETVFSTGR…MVWRDKTAYF (123 aa)). Active-site residues include His-3714, His-3729, and Lys-3758.

It belongs to the arteriviridae polyprotein family. In terms of assembly, nsp1-alpha papain-like: Interacts with host RNF31. Interacts with host EIF2AK2; this interaction occurs in host stress granules and leads to EIF2AK2 inhibition. Interacts with host G3BP1; this interaction probably plays a role in Nsp1-beta-mediated inhibition of host EIF2AK2. As to quaternary structure, interacts with host DDX18; this interaction redistributes host DDX18 to the cytoplasm. In terms of assembly, interacts with host IFITM1. Interacts with host DDX5. As to quaternary structure, interacts with host OTULIN. In terms of assembly, interacts with host LGALS3. Post-translationally, specific enzymatic cleavages in vivo by its own proteases yield mature proteins. Nsp1 is autocleaved into two subunits, Nsp1-alpha and Nsp1-beta. There are two alternative pathways for processing. Either nsp4-5 is cleaved, which represents the major pathway or the nsp5-6 and nsp6-7 are processed, which represents the minor pathway. The major pathway occurs when nsp2 acts as a cofactor for nsp4.

It is found in the host nucleus. Its subcellular location is the host cytoplasm. The protein resides in the host membrane. It localises to the host endoplasmic reticulum. The protein localises to the host perinuclear region. The catalysed reaction is RNA(n) + a ribonucleoside 5'-triphosphate = RNA(n+1) + diphosphate. It carries out the reaction ATP + H2O = ADP + phosphate + H(+). The enzyme catalyses Thiol-dependent hydrolysis of ester, thioester, amide, peptide and isopeptide bonds formed by the C-terminal Gly of ubiquitin (a 76-residue protein attached to proteins as an intracellular targeting signal).. It catalyses the reaction uridylyl-uridylyl-ribonucleotide-RNA = a 3'-end uridylyl-2',3'-cyclophospho-uridine-RNA + a 5'-end dephospho-ribonucleoside-RNA. Contains the activities necessary for the transcription of negative stranded RNA, leader RNA, subgenomic mRNAs and progeny virion RNA as well as proteinases responsible for the cleavage of the polyprotein into functional products. In terms of biological role, inhibits host IFN-beta production. Plays a role in the degradation of the host transcriptional activator CREBBP protein. The degradation of host CREBBP which is a key component of the IFN enhanceosome is likely responsible for the inhibition of interferon mediated by Nsp1-alpha. Also participates in the inhibition of host NF-kappa-B activation by counteracting LUBAC-dependent induction of NF-kappa-B. Reduces host NEMO ubiquitination by blocking the interaction between the two LUBAC complex components RNF31 and SHARPIN. Functionally, plays a role in blocking host mRNA nuclear export to the cytoplasm and subversion of host protein synthesis. Additionally, inhibits the interferon-activated JAK/STAT signal transduction by mediating the ubiquitination and subsequent proteasomal degradation of host KPNA1. Repurposes the host antiviral stress granules into a proviral platform to counteract the EIF2AK2/PKR restriction, thereby regulating the host inflammatory response. Its function is as follows. Multifunctional protein that acts as a viral protease and as a viral antagonist of host immune response. Cleaves the nsp2/nsp3 site in the viral polyprotein. Displays deubiquitinating activity that cleaves both ubiquitinated and ISGylated products and therefore inhibits ubiquitin and ISG15-dependent host innate immunity. Also deubiquinates host NFKBIA, thereby interfering with NFKBIA degradation and impairing subsequent NF-kappa-B activation. Plays a role in the inhibition of the immune response by interacting with host IFITM1. This interaction leads to the proteasomal degradation of the IFN-induced antiviral protein IFITM1. In terms of biological role, cleaves the majority of cleavage sites present in the C-terminus of the polyprotein. Triggers host apoptosis through caspase-3, -8, and -9 activations. Subverts host innate immune responses through its protease activity. Targets the NF-kappa-B essential modulator NEMO and mediates its cleavage. Blocks host interferon beta induction and downstream signaling by cleaving mitochondrial MAVS, dislodging it from the mitochondria. Impairs host defense by cleaving host mRNA-decapping enzyme DCP1A to attenuate its antiviral activity. Functionally, plays a role in the initial induction of autophagosomes from host endoplasmic reticulum. Its function is as follows. Plays a role in the inhibition of host STAT3 signaling pathway by inducing the degradation of STAT3. Responsible for replication and transcription of the viral RNA genome. In terms of biological role, displays RNA and DNA duplex-unwinding activities with 5' to 3' polarity. Functionally, plays a role in viral transcription/replication and prevents the simultaneous activation of host cell dsRNA sensors, such as MDA5/IFIH1, OAS, PKR and NLRP3 inflammasome. Acts by degrading the 5'-polyuridines generated during replication of the poly(A) region of viral genomic and subgenomic RNAs. Catalyzes a two-step reaction in which a 2'3'-cyclic phosphate (2'3'-cP) is first generated by 2'-O transesterification, which is then hydrolyzed to a 3'-phosphate (3'-P). If not degraded, poly(U) RNA would hybridize with poly(A) RNA tails and activate host dsRNA sensors. Also plays a role in the inhibition of host type I interferon production by recruiting host OTULIN to promote removal of linear ubiquitination targeting host NEMO. This chain is Replicase polyprotein 1ab (rep), found in Porcine reproductive and respiratory syndrome virus (strain 16244B) (PRRSV).